The chain runs to 83 residues: Cytochrome b559 subunit alpha (83 aa).

A helical transmembrane segment spans residues 21-35 (VIHSITIPSLFIAGW). His23 is a binding site for heme.

This sequence belongs to the PsbE/PsbF family. In terms of assembly, heterodimer of an alpha subunit and a beta subunit. PSII is composed of 1 copy each of membrane proteins PsbA, PsbB, PsbC, PsbD, PsbE, PsbF, PsbH, PsbI, PsbJ, PsbK, PsbL, PsbM, PsbT, PsbX, PsbY, PsbZ, Psb30/Ycf12, at least 3 peripheral proteins of the oxygen-evolving complex and a large number of cofactors. It forms dimeric complexes. Requires heme b as cofactor.

Its subcellular location is the plastid. It is found in the chloroplast thylakoid membrane. Its function is as follows. This b-type cytochrome is tightly associated with the reaction center of photosystem II (PSII). PSII is a light-driven water:plastoquinone oxidoreductase that uses light energy to abstract electrons from H(2)O, generating O(2) and a proton gradient subsequently used for ATP formation. It consists of a core antenna complex that captures photons, and an electron transfer chain that converts photonic excitation into a charge separation. This is Cytochrome b559 subunit alpha from Psilotum nudum (Whisk fern).